A 458-amino-acid chain; its full sequence is uncharacterized protein (458 aa).

Residues 1-10 are compositionally biased toward basic and acidic residues; sequence MQAEPKKSQA. A disordered region spans residues 1–20; the sequence is MQAEPKKSQAEQRAVAEPVS. The region spanning 23–84 is the TRAM domain; that stretch reads VSLVGEEYEV…ARFLRADAVE (62 aa). 4 residues coordinate [4Fe-4S] cluster: cysteine 97, cysteine 105, cysteine 108, and cysteine 193. 4 residues coordinate S-adenosyl-L-methionine: glutamine 287, tyrosine 316, glutamate 340, and aspartate 384. Cysteine 411 acts as the Nucleophile in catalysis.

This sequence belongs to the class I-like SAM-binding methyltransferase superfamily. RNA M5U methyltransferase family.

This is an uncharacterized protein from Streptomyces coelicolor (strain ATCC BAA-471 / A3(2) / M145).